We begin with the raw amino-acid sequence, 440 residues long: Probable pectate lyase 10 (440 aa).

An N-terminal signal peptide occupies residues 1 to 28 (MVIFSRSFLALSTTLIILALCINSSTMA). The tract at residues 32–56 (EDLNSHSSSNSSTANKLPNDDGAWN) is disordered. N-linked (GlcNAc...) asparagine glycosylation is found at asparagine 41 and asparagine 76. Residues aspartate 238, aspartate 262, and aspartate 266 each coordinate Ca(2+). Residue arginine 318 is part of the active site.

The protein belongs to the polysaccharide lyase 1 family. It depends on Ca(2+) as a cofactor.

The enzyme catalyses Eliminative cleavage of (1-&gt;4)-alpha-D-galacturonan to give oligosaccharides with 4-deoxy-alpha-D-galact-4-enuronosyl groups at their non-reducing ends.. It functions in the pathway glycan metabolism; pectin degradation; 2-dehydro-3-deoxy-D-gluconate from pectin: step 2/5. This chain is Probable pectate lyase 10, found in Arabidopsis thaliana (Mouse-ear cress).